The sequence spans 130 residues: Small ribosomal subunit protein bS18 (130 aa).

2 stretches are compositionally biased toward basic and acidic residues: residues 98–108 and 117–130; these read KKMEESVKSAE and EESK…AKTE. Residues 98 to 130 are disordered; sequence KKMEESVKSAEPKATAEATEESKPKRTRKAKTE.

The protein belongs to the bacterial ribosomal protein bS18 family. Part of the 30S ribosomal subunit. Forms a tight heterodimer with protein bS6.

Its function is as follows. Binds as a heterodimer with protein bS6 to the central domain of the 16S rRNA, where it helps stabilize the platform of the 30S subunit. In Metamycoplasma arthritidis (strain 158L3-1) (Mycoplasma arthritidis), this protein is Small ribosomal subunit protein bS18.